The chain runs to 502 residues: ATP synthase subunit alpha (502 aa).

Residues 115–135 (VDGLGPINTTNTRPIESPAPG) are disordered. Residue 169 to 176 (GDRQTGKT) participates in ATP binding.

This sequence belongs to the ATPase alpha/beta chains family. In terms of assembly, F-type ATPases have 2 components, CF(1) - the catalytic core - and CF(0) - the membrane proton channel. CF(1) has five subunits: alpha(3), beta(3), gamma(1), delta(1), epsilon(1). CF(0) has three main subunits: a(1), b(2) and c(9-12). The alpha and beta chains form an alternating ring which encloses part of the gamma chain. CF(1) is attached to CF(0) by a central stalk formed by the gamma and epsilon chains, while a peripheral stalk is formed by the delta and b chains.

The protein resides in the cell membrane. The catalysed reaction is ATP + H2O + 4 H(+)(in) = ADP + phosphate + 5 H(+)(out). In terms of biological role, produces ATP from ADP in the presence of a proton gradient across the membrane. The alpha chain is a regulatory subunit. This chain is ATP synthase subunit alpha, found in Bacillus mycoides (strain KBAB4) (Bacillus weihenstephanensis).